Consider the following 142-residue polypeptide: Small ribosomal subunit protein bS16 (142 aa).

The tract at residues 88–142 (GAEGTLRQPEGKTPFVAPDNGSVIIPEAITPKAEKAEEAPAEDAAPAEDDAEKAE) is disordered. Positions 126-142 (APAEDAAPAEDDAEKAE) are enriched in acidic residues.

Belongs to the bacterial ribosomal protein bS16 family.

The sequence is that of Small ribosomal subunit protein bS16 from Kocuria rhizophila (strain ATCC 9341 / DSM 348 / NBRC 103217 / DC2201).